A 287-amino-acid chain; its full sequence is Coatomer subunit epsilon-1 (287 aa).

This sequence belongs to the COPE family. In terms of assembly, oligomeric complex that consists of at least the alpha, beta, beta', gamma, delta, epsilon and zeta subunits.

It localises to the cytoplasm. The protein localises to the golgi apparatus membrane. The protein resides in the cytoplasmic vesicle. Its subcellular location is the COPI-coated vesicle membrane. In terms of biological role, the coatomer is a cytosolic protein complex that binds to dilysine motifs and reversibly associates with Golgi non-clathrin-coated vesicles, which further mediate biosynthetic protein transport from the ER, via the Golgi up to the trans Golgi network. The coatomer complex is required for budding from Golgi membranes, and is essential for the retrograde Golgi-to-ER transport of dilysine-tagged proteins. The chain is Coatomer subunit epsilon-1 (COPE1) from Oryza sativa subsp. japonica (Rice).